Consider the following 279-residue polypeptide: Ribosomal RNA small subunit methyltransferase J (279 aa).

Residues 138–139 (ER) and aspartate 194 contribute to the S-adenosyl-L-methionine site.

It belongs to the methyltransferase superfamily. RsmJ family.

It localises to the cytoplasm. It carries out the reaction guanosine(1516) in 16S rRNA + S-adenosyl-L-methionine = N(2)-methylguanosine(1516) in 16S rRNA + S-adenosyl-L-homocysteine + H(+). Specifically methylates the guanosine in position 1516 of 16S rRNA. The protein is Ribosomal RNA small subunit methyltransferase J of Acinetobacter baumannii (strain SDF).